We begin with the raw amino-acid sequence, 186 residues long: ATP synthase subunit b (186 aa).

The helical transmembrane segment at 5-25 (LILNLLVLLAPAAVFAAGGGH) threads the bilayer.

It belongs to the ATPase B chain family. As to quaternary structure, F-type ATPases have 2 components, F(1) - the catalytic core - and F(0) - the membrane proton channel. F(1) has five subunits: alpha(3), beta(3), gamma(1), delta(1), epsilon(1). F(0) has three main subunits: a(1), b(2) and c(10-14). The alpha and beta chains form an alternating ring which encloses part of the gamma chain. F(1) is attached to F(0) by a central stalk formed by the gamma and epsilon chains, while a peripheral stalk is formed by the delta and b chains.

The protein resides in the cell inner membrane. F(1)F(0) ATP synthase produces ATP from ADP in the presence of a proton or sodium gradient. F-type ATPases consist of two structural domains, F(1) containing the extramembraneous catalytic core and F(0) containing the membrane proton channel, linked together by a central stalk and a peripheral stalk. During catalysis, ATP synthesis in the catalytic domain of F(1) is coupled via a rotary mechanism of the central stalk subunits to proton translocation. Its function is as follows. Component of the F(0) channel, it forms part of the peripheral stalk, linking F(1) to F(0). The protein is ATP synthase subunit b of Bdellovibrio bacteriovorus (strain ATCC 15356 / DSM 50701 / NCIMB 9529 / HD100).